Here is a 185-residue protein sequence, read N- to C-terminus: Ribosome-recycling factor (185 aa).

Belongs to the RRF family.

The protein localises to the cytoplasm. Responsible for the release of ribosomes from messenger RNA at the termination of protein biosynthesis. May increase the efficiency of translation by recycling ribosomes from one round of translation to another. The chain is Ribosome-recycling factor from Shewanella sp. (strain ANA-3).